Reading from the N-terminus, the 105-residue chain is Cell division protein FtsL (105 aa).

Residues M1–K24 lie on the Cytoplasmic side of the membrane. Residues A25–Q45 form a helical membrane-spanning segment. Residues T46–E105 are Extracellular-facing.

The protein belongs to the FtsL family.

Its subcellular location is the cell membrane. Functionally, essential cell division protein. The protein is Cell division protein FtsL of Streptococcus pneumoniae (strain ATCC BAA-255 / R6).